The sequence spans 550 residues: Pectinesterase 2.1 (550 aa).

Asparagine 179 carries an N-linked (GlcNAc...) asparagine glycan. Residues threonine 312 and glutamine 342 each coordinate substrate. A disulfide bridge connects residues cysteine 331 and cysteine 358. Aspartate 365 acts as the Proton donor in catalysis. Aspartate 386 (nucleophile) is an active-site residue. Residues cysteine 399 and cysteine 433 are joined by a disulfide bond. Substrate-binding residues include arginine 454 and tryptophan 456.

This sequence in the N-terminal section; belongs to the PMEI family. The protein in the C-terminal section; belongs to the pectinesterase family.

The protein localises to the secreted. It is found in the cell wall. The enzyme catalyses [(1-&gt;4)-alpha-D-galacturonosyl methyl ester](n) + n H2O = [(1-&gt;4)-alpha-D-galacturonosyl](n) + n methanol + n H(+). It functions in the pathway glycan metabolism; pectin degradation; 2-dehydro-3-deoxy-D-gluconate from pectin: step 1/5. Its function is as follows. Pectinesterase may play a role in cell wall metabolism during fruit growth and development prior to ripening and may be required for preparing cell walls for softening by polygalacturonase during fruit ripening. In Solanum lycopersicum (Tomato), this protein is Pectinesterase 2.1 (PME2.1).